The chain runs to 985 residues: Protein psiQ (985 aa).

The signal sequence occupies residues 1-20 (MMKYIYILLIFSLLFLKINS). The region spanning 102-247 (QSTTNPNVYA…YDECGVCQGD (146 aa)) is the PA14 domain. N-linked (GlcNAc...) asparagine glycosylation is found at asparagine 127, asparagine 309, asparagine 424, asparagine 491, asparagine 517, asparagine 527, asparagine 592, asparagine 620, asparagine 649, asparagine 696, asparagine 735, asparagine 767, asparagine 786, asparagine 824, and asparagine 842.

It belongs to the prespore-cell-inducing factor family.

The protein resides in the secreted. The polypeptide is Protein psiQ (psiQ) (Dictyostelium discoideum (Social amoeba)).